Reading from the N-terminus, the 204-residue chain is Pectinesterase inhibitor 9 (204 aa).

The N-terminal stretch at 1-23 (MELKNTIFLVILLSITILQSSSA) is a signal peptide. Asn-26 is a glycosylation site (N-linked (GlcNAc...) asparagine). Intrachain disulfides connect Cys-38-Cys-47 and Cys-106-Cys-157.

The protein belongs to the PMEI family. In terms of assembly, binds reversibly to PME3 to inhibit its activity; the stability of the PME3-PMEI9 complex and the inhibition of the pectin methylesterase (PME) activity is pH-dependent, based on protonation status of amino-acids at the complex interface. In terms of tissue distribution, highly expressed in roots and etiolated hypocotyls. Expressed in seedlings, leaves, stems, siliques, floral buds and mature seeds.

It is found in the secreted. Its subcellular location is the extracellular space. The protein localises to the apoplast. Its function is as follows. Pectin methylesterase (PME) inhibitor that probably targets root-expressed PME and PME3 in a moderate pH-dependent manner, mainly in slightly acidic conditions (pH 6.3 and 5.0) and to some extent at pH 7.5; this processus relies on changes in the protonation of amino acids involved in intermolecular and intramolecular interactions. Regulates de-methylesterification of pectins in roots and affects root growth. The protein is Pectinesterase inhibitor 9 of Arabidopsis thaliana (Mouse-ear cress).